Here is a 290-residue protein sequence, read N- to C-terminus: Arylamine N-acetyltransferase 2 (290 aa).

The active-site Acyl-thioester intermediate is C68. The CoA site is built by S103 and G104. 106–107 is a binding site for substrate; the sequence is IH. Residues H107 and D122 contribute to the active site. Y208 is a CoA binding site.

This sequence belongs to the arylamine N-acetyltransferase family.

It is found in the cytoplasm. The enzyme catalyses an arylamine + acetyl-CoA = an N-acetylarylamine + CoA. It carries out the reaction an N-hydroxyarylamine + acetyl-CoA = an N-acetoxyarylamine + CoA. Catalyzes the N- or O-acetylation of various arylamine and heterocyclic amine substrates, and participates in the detoxification of a plethora of hydrazine and arylamine drugs. This Mesocricetus auratus (Golden hamster) protein is Arylamine N-acetyltransferase 2 (NAT2).